The following is a 206-amino-acid chain: Large ribosomal subunit protein uL4 (206 aa).

A disordered region spans residues threonine 60–glycine 84. Over residues phenylalanine 64–serine 76 the composition is skewed to basic residues.

The protein belongs to the universal ribosomal protein uL4 family. Part of the 50S ribosomal subunit.

One of the primary rRNA binding proteins, this protein initially binds near the 5'-end of the 23S rRNA. It is important during the early stages of 50S assembly. It makes multiple contacts with different domains of the 23S rRNA in the assembled 50S subunit and ribosome. In terms of biological role, forms part of the polypeptide exit tunnel. The polypeptide is Large ribosomal subunit protein uL4 (Rhodospirillum rubrum (strain ATCC 11170 / ATH 1.1.1 / DSM 467 / LMG 4362 / NCIMB 8255 / S1)).